Reading from the N-terminus, the 162-residue chain is Cyclic pyranopterin monophosphate synthase (162 aa).

Residues 75 to 77 and 113 to 114 contribute to the substrate site; these read LCH and ME. Aspartate 128 is an active-site residue.

It belongs to the MoaC family. Homohexamer; trimer of dimers.

It carries out the reaction (8S)-3',8-cyclo-7,8-dihydroguanosine 5'-triphosphate = cyclic pyranopterin phosphate + diphosphate. It participates in cofactor biosynthesis; molybdopterin biosynthesis. Catalyzes the conversion of (8S)-3',8-cyclo-7,8-dihydroguanosine 5'-triphosphate to cyclic pyranopterin monophosphate (cPMP). This Burkholderia lata (strain ATCC 17760 / DSM 23089 / LMG 22485 / NCIMB 9086 / R18194 / 383) protein is Cyclic pyranopterin monophosphate synthase.